An 863-amino-acid polypeptide reads, in one-letter code: Leucine--tRNA ligase (863 aa).

The 'HIGH' region signature appears at 41-51 (PYPSGRIHIGH). Positions 627–631 (KMSKS) match the 'KMSKS' region motif. K630 lines the ATP pocket.

Belongs to the class-I aminoacyl-tRNA synthetase family.

The protein localises to the cytoplasm. It catalyses the reaction tRNA(Leu) + L-leucine + ATP = L-leucyl-tRNA(Leu) + AMP + diphosphate. This Jannaschia sp. (strain CCS1) protein is Leucine--tRNA ligase.